A 504-amino-acid chain; its full sequence is Histidine--tRNA ligase (504 aa).

It belongs to the class-II aminoacyl-tRNA synthetase family. In terms of assembly, homodimer.

Its subcellular location is the cytoplasm. It carries out the reaction tRNA(His) + L-histidine + ATP = L-histidyl-tRNA(His) + AMP + diphosphate + H(+). The chain is Histidine--tRNA ligase (hisS) from Rhizobium meliloti (strain 1021) (Ensifer meliloti).